The primary structure comprises 643 residues: tRNA 5-methylaminomethyl-2-thiouridine biosynthesis bifunctional protein MnmC (643 aa).

The segment at 1–223 (MPDRLVSATL…VDDRLVGDYA (223 aa)) is tRNA (mnm(5)s(2)U34)-methyltransferase. The segment at 247–643 (IGAGLAGCAV…LRARRVGSAG (397 aa)) is FAD-dependent cmnm(5)s(2)U34 oxidoreductase.

The protein in the N-terminal section; belongs to the methyltransferase superfamily. tRNA (mnm(5)s(2)U34)-methyltransferase family. This sequence in the C-terminal section; belongs to the DAO family. FAD serves as cofactor.

Its subcellular location is the cytoplasm. It catalyses the reaction 5-aminomethyl-2-thiouridine(34) in tRNA + S-adenosyl-L-methionine = 5-methylaminomethyl-2-thiouridine(34) in tRNA + S-adenosyl-L-homocysteine + H(+). Catalyzes the last two steps in the biosynthesis of 5-methylaminomethyl-2-thiouridine (mnm(5)s(2)U) at the wobble position (U34) in tRNA. Catalyzes the FAD-dependent demodification of cmnm(5)s(2)U34 to nm(5)s(2)U34, followed by the transfer of a methyl group from S-adenosyl-L-methionine to nm(5)s(2)U34, to form mnm(5)s(2)U34. The sequence is that of tRNA 5-methylaminomethyl-2-thiouridine biosynthesis bifunctional protein MnmC from Burkholderia cenocepacia (strain HI2424).